The following is a 173-amino-acid chain: Chorion class B protein Ld32 (173 aa).

A signal peptide spans 1–7; the sequence is FVQSALS.

This sequence belongs to the chorion protein family.

In terms of biological role, this protein is one of many from the eggshell of the gypsy moth. In Lymantria dispar (Gypsy moth), this protein is Chorion class B protein Ld32.